We begin with the raw amino-acid sequence, 194 residues long: uncharacterized protein (194 aa).

This is an uncharacterized protein from Rickettsia prowazekii (strain Madrid E).